Here is an 897-residue protein sequence, read N- to C-terminus: High molecular weight rhoptry protein 3 (897 aa).

The first 24 residues, 1–24 (MRSKHLVTLFIITFLSFSTVKVWG), serve as a signal peptide directing secretion. Intrachain disulfides connect C157–C231, C244–C253, C262–C276, C421–C620, and C475–C536. The helical transmembrane segment at 597–615 (FVLYFISIISVLYINEYYY) threads the bilayer. 2 disordered regions span residues 788-845 (KEQS…SNLK) and 859-897 (QLDK…ENEL). Positions 792–801 (KSTSAASTSD) are enriched in polar residues. A compositionally biased stretch (low complexity) spans 802–817 (EISGSEGPSTESTSTG). The residue at position 804 (S804) is a Phosphoserine; by CDPK1. The span at 820–832 (GEDKTTDNTYKEM) shows a compositional bias: basic and acidic residues. The segment covering 865–876 (PKKKKSKRKKKR) has biased composition (basic residues). The segment covering 877-889 (DSSSDRILLEESK) has biased composition (basic and acidic residues).

In terms of assembly, component of the RhopH complex. RhopH complex is composed of CLAG3.1/CLAG3.2, RhopH2 and RhopH3 with a 1:1:1 subunit stoichiometry. Interacts with CLAG3.1/CLAG3.2. Interacts with CDPK1; the interaction promotes RhopH3 phosphorylation in merozoites. Post-translationally, proteolytically cleaved near C-terminus.

It localises to the host cell membrane. Its subcellular location is the parasitophorous vacuole membrane. The protein localises to the cytoplasm. The protein resides in the cytoplasmic vesicle. It is found in the secretory vesicle. It localises to the rhoptry. Functionally, participates in the formation of new permeability pathways in Plasmodium-infected erythrocytes enabling the uptake of nutrients from the blood plasma. Required for maintaining invasion capacity of merozoites. Required for the trophozoite to schizont developmental transition of the intracellular parasite. This Plasmodium falciparum (isolate 3D7) protein is High molecular weight rhoptry protein 3.